Here is a 560-residue protein sequence, read N- to C-terminus: DNA ligase B (560 aa).

Lys124 acts as the N6-AMP-lysine intermediate in catalysis.

It belongs to the NAD-dependent DNA ligase family. LigB subfamily.

It carries out the reaction NAD(+) + (deoxyribonucleotide)n-3'-hydroxyl + 5'-phospho-(deoxyribonucleotide)m = (deoxyribonucleotide)n+m + AMP + beta-nicotinamide D-nucleotide.. Its function is as follows. Catalyzes the formation of phosphodiester linkages between 5'-phosphoryl and 3'-hydroxyl groups in double-stranded DNA using NAD as a coenzyme and as the energy source for the reaction. The sequence is that of DNA ligase B from Escherichia coli (strain SMS-3-5 / SECEC).